The primary structure comprises 1368 residues: DNA-directed RNA polymerase subunit beta (1368 aa).

The protein belongs to the RNA polymerase beta chain family. As to quaternary structure, the RNAP catalytic core consists of 2 alpha, 1 beta, 1 beta' and 1 omega subunit. When a sigma factor is associated with the core the holoenzyme is formed, which can initiate transcription.

The enzyme catalyses RNA(n) + a ribonucleoside 5'-triphosphate = RNA(n+1) + diphosphate. DNA-dependent RNA polymerase catalyzes the transcription of DNA into RNA using the four ribonucleoside triphosphates as substrates. The protein is DNA-directed RNA polymerase subunit beta of Legionella pneumophila subsp. pneumophila (strain Philadelphia 1 / ATCC 33152 / DSM 7513).